A 126-amino-acid chain; its full sequence is 13 kDa ribonucleoprotein-associated protein (126 aa).

The protein belongs to the eukaryotic ribosomal protein eL8 family. As to quaternary structure, component of the U3 snoRNP particle. Binds to the C'/D and B/C motifs in U3 snoRNA. Component of the 25S U4/U6.U5 tri-snRNP particle, a subcomplex of the spliceosome. Binds to the 5' stem-loop of U4 snRNA.

The protein resides in the nucleus. Its subcellular location is the nucleolus. Functionally, common component of the spliceosome and rRNA processing machinery. In association with the spliceosomal U4/U6.U5 tri-snRNP particle, required for splicing of pre-mRNA. In association with box C/D snoRNPs, required for processing of pre-ribosomal RNA (rRNA) and site-specific 2'-O-methylation of substrate RNAs. Essential for the accumulation and stability of U4 snRNA, U6 snRNA, and box C/D snoRNAs. This chain is 13 kDa ribonucleoprotein-associated protein (SNU13), found in Kluyveromyces lactis (strain ATCC 8585 / CBS 2359 / DSM 70799 / NBRC 1267 / NRRL Y-1140 / WM37) (Yeast).